We begin with the raw amino-acid sequence, 166 residues long: Calmodulin-like protein 5 (166 aa).

EF-hand domains follow at residues 11 to 46, 47 to 82, 96 to 131, and 132 to 166; these read EQVA…LGQT, PTRE…KASR, AADE…LGEK, and LTDE…LSDQ. Ca(2+)-binding residues include Asp-24, Asp-26, Asp-28, Cys-30, Glu-35, Asp-60, Asp-62, Asn-64, Thr-66, Glu-71, Asp-109, Asp-111, Asp-113, and Glu-120. Position 131 is an N6,N6,N6-trimethyllysine (Lys-131). Asp-145, Asp-147, Asp-149, Gln-151, and Glu-156 together coordinate Ca(2+).

The protein belongs to the calmodulin family.

Its function is as follows. Potential calcium sensor. The sequence is that of Calmodulin-like protein 5 (CML5) from Oryza sativa subsp. japonica (Rice).